Reading from the N-terminus, the 236-residue chain is Small ribosomal subunit protein uS2c (236 aa).

The protein belongs to the universal ribosomal protein uS2 family.

The protein localises to the plastid. The protein resides in the chloroplast. The protein is Small ribosomal subunit protein uS2c (rps2) of Carica papaya (Papaya).